The sequence spans 96 residues: Large ribosomal subunit protein uL23 (96 aa).

The protein belongs to the universal ribosomal protein uL23 family. As to quaternary structure, part of the 50S ribosomal subunit. Contacts protein L29, and trigger factor when it is bound to the ribosome.

Functionally, one of the early assembly proteins it binds 23S rRNA. One of the proteins that surrounds the polypeptide exit tunnel on the outside of the ribosome. Forms the main docking site for trigger factor binding to the ribosome. The polypeptide is Large ribosomal subunit protein uL23 (Enterococcus faecalis (strain ATCC 700802 / V583)).